The primary structure comprises 171 residues: 3-hydroxydecanoyl-[acyl-carrier-protein] dehydratase (171 aa).

Residue H71 is part of the active site.

The protein belongs to the thioester dehydratase family. FabA subfamily. In terms of assembly, homodimer.

The protein resides in the cytoplasm. It carries out the reaction a (3R)-hydroxyacyl-[ACP] = a (2E)-enoyl-[ACP] + H2O. The catalysed reaction is (3R)-hydroxydecanoyl-[ACP] = (2E)-decenoyl-[ACP] + H2O. It catalyses the reaction (2E)-decenoyl-[ACP] = (3Z)-decenoyl-[ACP]. The protein operates within lipid metabolism; fatty acid biosynthesis. Necessary for the introduction of cis unsaturation into fatty acids. Catalyzes the dehydration of (3R)-3-hydroxydecanoyl-ACP to E-(2)-decenoyl-ACP and then its isomerization to Z-(3)-decenoyl-ACP. Can catalyze the dehydratase reaction for beta-hydroxyacyl-ACPs with saturated chain lengths up to 16:0, being most active on intermediate chain length. In Sinorhizobium medicae (strain WSM419) (Ensifer medicae), this protein is 3-hydroxydecanoyl-[acyl-carrier-protein] dehydratase.